A 257-amino-acid chain; its full sequence is Type III pantothenate kinase (257 aa).

5–12 (DIGNTNIK) lines the ATP pocket. 107–110 (GSDR) provides a ligand contact to substrate. Asp109 (proton acceptor) is an active-site residue. Thr133 is a binding site for ATP.

This sequence belongs to the type III pantothenate kinase family. As to quaternary structure, homodimer. The cofactor is NH4(+). K(+) is required as a cofactor.

It localises to the cytoplasm. The catalysed reaction is (R)-pantothenate + ATP = (R)-4'-phosphopantothenate + ADP + H(+). Its pathway is cofactor biosynthesis; coenzyme A biosynthesis; CoA from (R)-pantothenate: step 1/5. In terms of biological role, catalyzes the phosphorylation of pantothenate (Pan), the first step in CoA biosynthesis. The sequence is that of Type III pantothenate kinase from Ehrlichia ruminantium (strain Gardel).